A 101-amino-acid polypeptide reads, in one-letter code: Small ribosomal subunit protein uS14A (101 aa).

Disordered regions lie at residues 1 to 20 and 28 to 72; these read MAKK…VARY and TEII…RPRG. Basic and acidic residues-rich tracts occupy residues 38 to 53 and 61 to 70; these read EAER…RQPR and RNRDSVDGRP.

This sequence belongs to the universal ribosomal protein uS14 family. Part of the 30S ribosomal subunit. Contacts proteins S3 and S10.

In terms of biological role, binds 16S rRNA, required for the assembly of 30S particles and may also be responsible for determining the conformation of the 16S rRNA at the A site. In Streptomyces avermitilis (strain ATCC 31267 / DSM 46492 / JCM 5070 / NBRC 14893 / NCIMB 12804 / NRRL 8165 / MA-4680), this protein is Small ribosomal subunit protein uS14A.